Consider the following 360-residue polypeptide: Peptide chain release factor 1 (360 aa).

N5-methylglutamine is present on Q236.

This sequence belongs to the prokaryotic/mitochondrial release factor family. In terms of processing, methylated by PrmC. Methylation increases the termination efficiency of RF1.

The protein localises to the cytoplasm. Its function is as follows. Peptide chain release factor 1 directs the termination of translation in response to the peptide chain termination codons UAG and UAA. The sequence is that of Peptide chain release factor 1 from Lactiplantibacillus plantarum (strain ATCC BAA-793 / NCIMB 8826 / WCFS1) (Lactobacillus plantarum).